The sequence spans 177 residues: Anditomin synthesis protein L (177 aa).

2 helical membrane passes run 54 to 74 (VVNS…PFIM) and 117 to 137 (IVNF…YMVF). Asn165 carries N-linked (GlcNAc...) asparagine glycosylation.

It is found in the membrane. The protein operates within secondary metabolite biosynthesis; terpenoid biosynthesis. Part of the gene cluster that mediates the biosynthesis of anditomin, a fungal meroterpenoid. The first step of the pathway is the synthesis of 3,5-dimethylorsellinic acid (DMOA) by the polyketide synthase andM. DMOA is then converted to the phthalide compound 5,7-dihydroxy-4,6-dimethylphthalide (DHDMP) by the cytochrome P450 monooxygenase andK, which is further prenylated by the prenyltransferase andD to yield farnesyl-DHDMP. Further epoxidation by the FAD-dependent monooxygenase andE leads to epoxyfarnesyl-DHDMP. The next step involves the terpene cyclase andB that converts epoxyfarnesyl-DHDMP into preandiloid A through opening of the epoxide ring followed by the cyclization of the farnesyl moiety. Preandiloid A is in turn oxidized at the C-3 hydroxyl group to yield preandiloid B by the dehydrogenase andC. The dioxygenase andA is solely responsible for the dehydrogenation of preandiloid B leading to the enone preandiloid C, as well as for the intriguing structural rearrangement to generate the bicyclo[2.2.2]octane core, transforming preandiloid C into andiconin. FAD-binding monooxygenase andJ then produces andilesin D which is reduced by dehydrogenase andI to yield andilesin A. Action of acetyltransferase andG followed by a spontaneous acetate elimination leads then to andilesin B, which is in turn substrate of the short chain dehydrogenase andH to yield andilesin C. Finally, the dioxygenase andF catalyzes the transformation of andilesin C to anditomin. The exact role of andL within the anditomin biosynthetic pathway has not been identified yet. The chain is Anditomin synthesis protein L from Emericella variicolor (Aspergillus stellatus).